The chain runs to 229 residues: Protein-L-isoaspartate O-methyltransferase (229 aa).

Serine 65 is an active-site residue.

It belongs to the methyltransferase superfamily. L-isoaspartyl/D-aspartyl protein methyltransferase family.

The protein localises to the cytoplasm. The enzyme catalyses [protein]-L-isoaspartate + S-adenosyl-L-methionine = [protein]-L-isoaspartate alpha-methyl ester + S-adenosyl-L-homocysteine. Functionally, catalyzes the methyl esterification of L-isoaspartyl residues in peptides and proteins that result from spontaneous decomposition of normal L-aspartyl and L-asparaginyl residues. It plays a role in the repair and/or degradation of damaged proteins. This chain is Protein-L-isoaspartate O-methyltransferase, found in Chlorobium phaeovibrioides (strain DSM 265 / 1930) (Prosthecochloris vibrioformis (strain DSM 265)).